Reading from the N-terminus, the 205-residue chain is Small ribosomal subunit protein uS4 (205 aa).

The segment covering Met1–Asp12 has biased composition (basic residues). The interval Met1–Gly49 is disordered. The 62-residue stretch at Arg94–Val155 folds into the S4 RNA-binding domain.

Belongs to the universal ribosomal protein uS4 family. Part of the 30S ribosomal subunit. Contacts protein S5. The interaction surface between S4 and S5 is involved in control of translational fidelity.

In terms of biological role, one of the primary rRNA binding proteins, it binds directly to 16S rRNA where it nucleates assembly of the body of the 30S subunit. With S5 and S12 plays an important role in translational accuracy. The polypeptide is Small ribosomal subunit protein uS4 (Methylorubrum populi (strain ATCC BAA-705 / NCIMB 13946 / BJ001) (Methylobacterium populi)).